The primary structure comprises 348 residues: Dihydroorotase (348 aa).

Zn(2+) is bound by residues H17 and H19. Substrate contacts are provided by residues 19–21 (HLR) and N45. Zn(2+)-binding residues include K103, H140, and H178. The residue at position 103 (K103) is an N6-carboxylysine. H140 is a binding site for substrate. Position 223 (L223) interacts with substrate. Zn(2+) is bound at residue D251. D251 is a catalytic residue. Substrate contacts are provided by H255 and A267.

The protein belongs to the metallo-dependent hydrolases superfamily. DHOase family. Class II DHOase subfamily. As to quaternary structure, homodimer. Requires Zn(2+) as cofactor.

It catalyses the reaction (S)-dihydroorotate + H2O = N-carbamoyl-L-aspartate + H(+). It participates in pyrimidine metabolism; UMP biosynthesis via de novo pathway; (S)-dihydroorotate from bicarbonate: step 3/3. Functionally, catalyzes the reversible cyclization of carbamoyl aspartate to dihydroorotate. This is Dihydroorotase from Yersinia pestis.